The chain runs to 378 residues: Gibberellin 20 oxidase 2 (378 aa).

The span at 1–10 (MAILCTTTSP) shows a compositional bias: polar residues. A disordered region spans residues 1-26 (MAILCTTTSPAEKEHEPKQDLEKDQT). A compositionally biased stretch (basic and acidic residues) spans 11–25 (AEKEHEPKQDLEKDQ). The Fe2OG dioxygenase domain occupies 220-320 (ENDSIMRLNH…RKSMAFFLCP (101 aa)). 3 residues coordinate Fe cation: H245, D247, and H301. The active site involves R311.

The protein belongs to the iron/ascorbate-dependent oxidoreductase family. GA20OX subfamily. It depends on Fe(2+) as a cofactor. Requires L-ascorbate as cofactor. As to expression, expressed in inflorescence and developing siliques. Detected in seeds, roots, cotyledons and leaves. In seeds, specifically detected at the rim of the embryo and the outer integument.

It catalyses the reaction gibberellin A12 + 2 2-oxoglutarate + 3 O2 + H(+) = gibberellin A9 + 2 succinate + 3 CO2 + 2 H2O. The enzyme catalyses gibberellin A12 + 2-oxoglutarate + O2 = gibberellin A15 + succinate + CO2. It carries out the reaction gibberellin A15 + 2-oxoglutarate + O2 = gibberellin A24 + succinate + CO2 + H2O. The catalysed reaction is gibberellin A53 + 2-oxoglutarate + O2 = gibberellin A44 + succinate + CO2. It catalyses the reaction gibberellin A12 + 3 2-oxoglutarate + 3 O2 = gibberellin A25 + 3 succinate + 3 CO2 + H2O + H(+). The protein operates within plant hormone biosynthesis; gibberellin biosynthesis. In terms of biological role, key oxidase enzyme in the biosynthesis of gibberellin that catalyzes the conversion of GA12 to GA9, via a three-step oxidation at C-20 of the GA skeleton, and GA25 is also formed as a minor product. GA53 is less effectively oxidized than GA12 and is only oxidized one step to GA44. Involved in the promotion of the floral transition, fertility and silique elongation, but plays only a minor role in elongation of seedling organs. Acts redundantly with GA20OX1. The chain is Gibberellin 20 oxidase 2 (GA20OX2) from Arabidopsis thaliana (Mouse-ear cress).